Reading from the N-terminus, the 689-residue chain is Glycine--tRNA ligase beta subunit (689 aa).

This sequence belongs to the class-II aminoacyl-tRNA synthetase family. Tetramer of two alpha and two beta subunits.

The protein localises to the cytoplasm. The catalysed reaction is tRNA(Gly) + glycine + ATP = glycyl-tRNA(Gly) + AMP + diphosphate. This is Glycine--tRNA ligase beta subunit from Desulforapulum autotrophicum (strain ATCC 43914 / DSM 3382 / VKM B-1955 / HRM2) (Desulfobacterium autotrophicum).